A 94-amino-acid polypeptide reads, in one-letter code: MNQPQLPSPPQLRFSCSVIFSRNLVLTLTQSHPLCGTSLEPTPMCKRVVQQCYLEPHHQTLRSPGKLSLDSFTSLTSLHASSACTSPRWSGTCY.

This is an uncharacterized protein from Narcissus mosaic virus (NMV).